The primary structure comprises 863 residues: DNA-directed RNA polymerase subunit beta' (863 aa).

The interval 1–83 is disordered; the sequence is MSGEVAQDQP…SKKKETKASQ (83 aa). Residues 23–36 are compositionally biased toward polar residues; sequence EIVNSAITVQSSAK. Positions 159, 161, 180, and 183 each coordinate Zn(2+). Mg(2+) contacts are provided by D621, D623, and D625.

The protein belongs to the RNA polymerase beta' chain family. RpoC1 subfamily. As to quaternary structure, in plastids the minimal PEP RNA polymerase catalytic core is composed of four subunits: alpha, beta, beta', and beta''. When a (nuclear-encoded) sigma factor is associated with the core the holoenzyme is formed, which can initiate transcription. The cofactor is Mg(2+). It depends on Zn(2+) as a cofactor.

Its subcellular location is the plastid. The protein localises to the chloroplast. The enzyme catalyses RNA(n) + a ribonucleoside 5'-triphosphate = RNA(n+1) + diphosphate. In terms of biological role, DNA-dependent RNA polymerase catalyzes the transcription of DNA into RNA using the four ribonucleoside triphosphates as substrates. In Nephroselmis olivacea (Green alga), this protein is DNA-directed RNA polymerase subunit beta'.